We begin with the raw amino-acid sequence, 127 residues long: Large ribosomal subunit protein bL12 (127 aa).

This sequence belongs to the bacterial ribosomal protein bL12 family. In terms of assembly, homodimer. Part of the ribosomal stalk of the 50S ribosomal subunit. Forms a multimeric L10(L12)X complex, where L10 forms an elongated spine to which 2 to 4 L12 dimers bind in a sequential fashion. Binds GTP-bound translation factors.

Functionally, forms part of the ribosomal stalk which helps the ribosome interact with GTP-bound translation factors. Is thus essential for accurate translation. This is Large ribosomal subunit protein bL12 from Streptomyces virginiae (Streptomyces cinnamonensis).